A 715-amino-acid polypeptide reads, in one-letter code: Polyribonucleotide nucleotidyltransferase (715 aa).

Mg(2+)-binding residues include D488 and D494. In terms of domain architecture, KH spans 555 to 614; the sequence is PKIETIKIPVDKIREVIGSGGKVIREIVEKTGAKIDIGEDGTIKIAAAEQTKIDAAKEWI. The S1 motif domain maps to 624–692; it reads GQIYTGKVVK…DRGKTRLSMK (69 aa). Positions 692–715 are disordered; that stretch reads KVVDQETGEDLSKSNEKAEEPADA. The span at 701 to 715 shows a compositional bias: basic and acidic residues; the sequence is DLSKSNEKAEEPADA.

It belongs to the polyribonucleotide nucleotidyltransferase family. Mg(2+) serves as cofactor.

It localises to the cytoplasm. The enzyme catalyses RNA(n+1) + phosphate = RNA(n) + a ribonucleoside 5'-diphosphate. Functionally, involved in mRNA degradation. Catalyzes the phosphorolysis of single-stranded polyribonucleotides processively in the 3'- to 5'-direction. The sequence is that of Polyribonucleotide nucleotidyltransferase from Phenylobacterium zucineum (strain HLK1).